A 139-amino-acid polypeptide reads, in one-letter code: uncharacterized protein (139 aa).

The next 2 helical transmembrane spans lie at 35-55 (AYFK…AAAA) and 119-139 (CCLF…VFCV).

The protein resides in the membrane. This is an uncharacterized protein from Saccharomyces cerevisiae (strain ATCC 204508 / S288c) (Baker's yeast).